The primary structure comprises 157 residues: Mini-ribonuclease 3 (157 aa).

D18 is a catalytic residue. The tract at residues 126 to 157 is disordered; the sequence is EEDEGKGKGETAKEEESITDALSPAEQSEIDC. A compositionally biased stretch (basic and acidic residues) spans 130-141; sequence GKGKGETAKEEE.

The protein belongs to the MrnC RNase family. As to quaternary structure, homodimer. It depends on Mg(2+) as a cofactor.

The protein resides in the cytoplasm. In terms of biological role, involved in correct processing of both the 5' and 3' ends of 23S rRNA precursor. Processes 30S rRNA precursor transcript even in absence of ribonuclease 3 (Rnc); Rnc processes 30S rRNA into smaller rRNA precursors. In Desulfitobacterium hafniense (strain Y51), this protein is Mini-ribonuclease 3.